We begin with the raw amino-acid sequence, 131 residues long: Small ribosomal subunit protein uS8 (131 aa).

This sequence belongs to the universal ribosomal protein uS8 family. In terms of assembly, part of the 30S ribosomal subunit. Contacts proteins S5 and S12.

Its function is as follows. One of the primary rRNA binding proteins, it binds directly to 16S rRNA central domain where it helps coordinate assembly of the platform of the 30S subunit. This Bordetella avium (strain 197N) protein is Small ribosomal subunit protein uS8.